The chain runs to 165 residues: MDQAKLARMQASVRIGGKGTPRRKVKKVHKTSGADDKKLQATLKKMNVQPIQAIEEVNMFKEDGNVIHFAAPKEERALTVGCEIKVHASVPSNTFALYGNGEEKELTELVPGILNQLGPDSLASLRKLAESYQNMQKNQAGEKKDDDEDDIPDLVEGENFEKSVD.

Disordered regions lie at residues 1-34 and 133-165; these read MDQAKLARMQASVRIGGKGTPRRKVKKVHKTSGA and QNMQKNQAGEKKDDDEDDIPDLVEGENFEKSVD. The segment covering 20–30 has biased composition (basic residues); sequence TPRRKVKKVHK. Positions 33 to 110 constitute an NAC-A/B domain; that stretch reads GADDKKLQAT…GEEKELTELV (78 aa). The segment covering 145–158 has biased composition (acidic residues); it reads DDDEDDIPDLVEGE.

It belongs to the NAC-beta family. In terms of assembly, part of the nascent polypeptide-associated complex (NAC), consisting of egd2 and egd1. NAC associates with ribosomes via egd1.

The protein resides in the cytoplasm. It is found in the nucleus. Component of the nascent polypeptide-associated complex (NAC), a dynamic component of the ribosomal exit tunnel, protecting the emerging polypeptides from interaction with other cytoplasmic proteins to ensure appropriate nascent protein targeting. The NAC complex also promotes mitochondrial protein import by enhancing productive ribosome interactions with the outer mitochondrial membrane and blocks the inappropriate interaction of ribosomes translating non-secretory nascent polypeptides with translocation sites in the membrane of the endoplasmic reticulum. EGD1 may act as a transcription factor that exert a negative effect on the expression of several genes that are transcribed by RNA polymerase II. The sequence is that of Nascent polypeptide-associated complex subunit beta (egd1) from Emericella nidulans (strain FGSC A4 / ATCC 38163 / CBS 112.46 / NRRL 194 / M139) (Aspergillus nidulans).